The following is an 88-amino-acid chain: DNA-directed RNA polymerase subunit omega (88 aa).

It belongs to the RNA polymerase subunit omega family. In terms of assembly, the RNAP catalytic core consists of 2 alpha, 1 beta, 1 beta' and 1 omega subunit. When a sigma factor is associated with the core the holoenzyme is formed, which can initiate transcription.

The catalysed reaction is RNA(n) + a ribonucleoside 5'-triphosphate = RNA(n+1) + diphosphate. In terms of biological role, promotes RNA polymerase assembly. Latches the N- and C-terminal regions of the beta' subunit thereby facilitating its interaction with the beta and alpha subunits. This Haemophilus influenzae (strain 86-028NP) protein is DNA-directed RNA polymerase subunit omega.